The sequence spans 479 residues: Endoglucanase 20 (479 aa).

An N-terminal signal peptide occupies residues 1–21 (MGKLLVLMLVGMFLAFESLEA). A glycan (N-linked (GlcNAc...) asparagine) is linked at Asn-29. Residue Asp-76 is the Nucleophile of the active site. Residue His-398 is part of the active site. Asn-442 carries N-linked (GlcNAc...) asparagine glycosylation. Residues Asp-449 and Glu-458 contribute to the active site.

It belongs to the glycosyl hydrolase 9 (cellulase E) family.

The protein localises to the secreted. The enzyme catalyses Endohydrolysis of (1-&gt;4)-beta-D-glucosidic linkages in cellulose, lichenin and cereal beta-D-glucans.. This Arabidopsis thaliana (Mouse-ear cress) protein is Endoglucanase 20.